A 1161-amino-acid chain; its full sequence is Lethal(2) giant larvae protein (1161 aa).

The tract at residues 15-86 is phospho-regulated basic and hydrophobic (PRBH) motif; that stretch reads DRHRLQKDLF…NNSASELNVQ (72 aa). WD repeat units lie at residues 39-72, 82-128, 131-167, 189-223, 231-263, 278-320, 328-358, and 380-464; these read SALA…LYGQ, ELNV…DGKL, VSSL…EPVI, SIRQ…QRAY, SVGL…PEPP, SINR…GHKV, VIDF…AYDL, and TCNY…YNFK. Phosphoserine is present on residues S473 and S484. WD repeat units follow at residues 513 to 594 and 603 to 664; these read KKIA…SGVL and TCMA…LRES. The residue at position 679 (S679) is a Phosphoserine. WD repeat units lie at residues 708–778, 787–832, 837–927, and 941–964; these read VRCL…KEIQ, GISI…LKPI, LTAN…LNAA, and CFTN…ALAT. 6 positions are modified to phosphoserine: S808, S869, S876, S887, S889, and S893. At S1013 the chain carries Phosphoserine. The tract at residues 1141–1161 is disordered; the sequence is EKTNGDNKIGTPKTAPEESQF.

This sequence belongs to the WD repeat L(2)GL family. In terms of assembly, may form multimeric complexes. Interacts with mahj. Interacts with aPKC; leading to phosphorylation. Interacts with ball. Phosphorylated by aPKC which lowers lipid affinity and promotes dissociation from the cell cortex. In developing oocytes, aPKC-mediated phosphorylation restricts activity to the oocyte posterior and is required for oocyte polarity formation. Expressed in the epithelial cells of the digestive tract and in gonads.

It localises to the cytoplasm. Its subcellular location is the cell cortex. In terms of biological role, essential for the development of polarized epithelia, for cell polarity associated with asymmetric cell division of neuroblasts during development, and for oocyte polarity formation. Promotes the formation of actin-rich projections at the oocyte cortex and the posterior enrichment of par-1 which is required for oocyte polarization. Regulates the localization of axis-specifying morphogens such as stau and grk. Has an essential role in control of cell proliferation and differentiation during development and could act as a tumor suppressor. Functionally, has an accessory function in control of cell proliferation and differentiation during development. This chain is Lethal(2) giant larvae protein (l(2)gl), found in Drosophila melanogaster (Fruit fly).